The primary structure comprises 103 residues: Co-chaperonin GroES (103 aa).

It belongs to the GroES chaperonin family. Heptamer of 7 subunits arranged in a ring. Interacts with the chaperonin GroEL.

The protein localises to the cytoplasm. Functionally, together with the chaperonin GroEL, plays an essential role in assisting protein folding. The GroEL-GroES system forms a nano-cage that allows encapsulation of the non-native substrate proteins and provides a physical environment optimized to promote and accelerate protein folding. GroES binds to the apical surface of the GroEL ring, thereby capping the opening of the GroEL channel. This chain is Co-chaperonin GroES, found in Thermosynechococcus vestitus (strain NIES-2133 / IAM M-273 / BP-1).